We begin with the raw amino-acid sequence, 492 residues long: Phosphatidylinositol-glycan biosynthesis class W protein (492 aa).

The next 5 helical transmembrane spans lie at 26 to 46, 59 to 79, 82 to 102, 127 to 147, and 156 to 176; these read FILTLMPISVLFQRVVFATFF, FILEFFFIIVPFISAITFTEL, FLIVGMLITCLVVPMFAQKNV, YRAFVMAATCICILAVDFQVF, and TYGISLMDIGVGSVVLSGALV. Residues 185–216 are disordered; sequence IEKQQKKKREEEEDDNDKINKTSSSSSSSSSA. Asparagine 204 is a glycosylation site (N-linked (GlcNAc...) asparagine). Positions 205–216 are enriched in low complexity; it reads KTSSSSSSSSSA. A helical transmembrane segment spans residues 264–284; the sequence is YGLHWNFFFTLGFVSISLAFL. The N-linked (GlcNAc...) asparagine glycan is linked to asparagine 289. The next 4 membrane-spanning stretches (helical) occupy residues 290 to 310, 331 to 351, 364 to 384, and 399 to 419; these read ISAILGVVLICVYQFLLNSFG, ICSFVGYLAIYLIGTKIGTEL, FATKLLISSIVFYILWILCEI, and VLAILSINLFNFSINILITLI. Asparagine 424 carries an N-linked (GlcNAc...) asparagine glycan. The next 2 helical transmembrane spans lie at 437-457 and 464-484; these read LFIFLLGNILTGLINFSMKTI and SMIIITSYTFALCLLAFILDY.

The protein belongs to the PIGW family.

It is found in the endoplasmic reticulum membrane. It participates in glycolipid biosynthesis; glycosylphosphatidylinositol-anchor biosynthesis. Its function is as follows. Probable acetyltransferase, which acetylates the inositol ring of phosphatidylinositol during biosynthesis of GPI-anchor. The protein is Phosphatidylinositol-glycan biosynthesis class W protein of Dictyostelium discoideum (Social amoeba).